The primary structure comprises 542 residues: Serine/threonine-protein phosphatase 2A regulatory subunit pptr-1 (542 aa).

Disordered regions lie at residues 1-28 (MHGS…TGGQ) and 500-542 (DYLK…PAKK). Polar residues predominate over residues 528-542 (KKSSTGSETTTPAKK).

It belongs to the phosphatase 2A regulatory subunit B56 family. As to quaternary structure, part of a complex consisting of a common heterodimeric core enzyme, composed of catalytic subunit let-92 and constant regulatory subunit paa-1, that associates with a variety of regulatory subunits which confer distinct properties to the holoenzyme. Interacts with akt-1 but not akt-2. Interacts with sgk-1. Interacts with P granule components meg-1, meg-3 and meg-4. Expressed in pharynx, vulva and spermatheca.

The protein localises to the cytoplasm. In terms of biological role, probable regulatory subunit of serine/threonine-protein phosphatase let-92 which negatively regulates the insulin receptor signaling cascade composed of daf-2, age-1, akt-1, akt-2 and sgk-1 by promoting the dephosphorylation of akt-1 on 'Thr-350'. Negatively regulates several functions controlled by the insulin pathway including dauer formation, lifespan, fat storage and stress resistance. Plays a role in the asymmetric segregation of the P granule components during embryonic cell divisions but does not play an essential role in specifying germ cell fate. Within a PP2A phosphatase complex, acts redundantly with pptr-2, to dephosphorylate P granule components including meg-1 and meg-3 to promote the assembly and accumulation of zygotic P granules in the posterior cytoplasm during zygote polarization, and thus maintain P granule distribution and segregation in early stage embryos following meiosis. In adults, required to promote germ cell proliferation and differentiation when exposed to thermic stress. This chain is Serine/threonine-protein phosphatase 2A regulatory subunit pptr-1, found in Caenorhabditis elegans.